Reading from the N-terminus, the 469-residue chain is MKILPKLERKLRRLKKRVTRTSLFRKLDLVHESARKKAFQESCETYKNQIENEYEIRNSLPKLSRSDKEAFLSDGSFHQAVGRVLLVAEFFAMMPVKGVTGKHPSDLSFSWRNIRTCFSLLFIASSLANFGLSLFKVLNNPISFNSIKPIIFRGSVLLVLIVALNLARQWPQLMMYWHTVEKDLPQYKTQLTKWKMGHTISMVMLLGMMLSFAEHILSMVSAINYASFCNRTADPIQNYFLRTNDEIFFVTSYSTTLALWGKFQNVFSTFIWNYMDLFVMIVSIGLASKFRQLNDDLRNFKGMNMAPSYWSERRIQYRNICILCDKMDDAISLITMVSFSNNLYFICVQLLRSLNTMPSVAHAVYFYFSLIFLIGRTLAVSLYSSSVHDESRLTLRYLRCVPKESWCPEVKRFTEEVISDEVALTGMKFFHLTRKLVLSVAGTIVTYELVLIQFHEDNDLWDCDQSYYS.

Topologically, residues 1 to 117 (MKILPKLERK…SFSWRNIRTC (117 aa)) are cytoplasmic. A helical transmembrane segment spans residues 118 to 138 (FSLLFIASSLANFGLSLFKVL). Topologically, residues 139–146 (NNPISFNS) are extracellular. The helical transmembrane segment at 147 to 167 (IKPIIFRGSVLLVLIVALNLA) threads the bilayer. The Cytoplasmic portion of the chain corresponds to 168-199 (RQWPQLMMYWHTVEKDLPQYKTQLTKWKMGHT). Residues 200–220 (ISMVMLLGMMLSFAEHILSMV) traverse the membrane as a helical segment. At 221-265 (SAINYASFCNRTADPIQNYFLRTNDEIFFVTSYSTTLALWGKFQN) the chain is on the extracellular side. The N-linked (GlcNAc...) asparagine glycan is linked to asparagine 230. Residues 266-286 (VFSTFIWNYMDLFVMIVSIGL) form a helical membrane-spanning segment. The Cytoplasmic segment spans residues 287–330 (ASKFRQLNDDLRNFKGMNMAPSYWSERRIQYRNICILCDKMDDA). Residues 331–351 (ISLITMVSFSNNLYFICVQLL) traverse the membrane as a helical segment. Residues 352-353 (RS) are Extracellular-facing. Residues 354-374 (LNTMPSVAHAVYFYFSLIFLI) traverse the membrane as a helical segment. The Cytoplasmic portion of the chain corresponds to 375 to 435 (GRTLAVSLYS…GMKFFHLTRK (61 aa)). A helical membrane pass occupies residues 436–456 (LVLSVAGTIVTYELVLIQFHE). At 457–469 (DNDLWDCDQSYYS) the chain is on the extracellular side.

It belongs to the insect chemoreceptor superfamily. Gustatory receptor (GR) family. Gr5a subfamily. As to expression, expressed in Gr5a-expressing sugar-sensing cells.

The protein resides in the cell membrane. In terms of biological role, one of the few identified sugar gustatory receptors identified so far and which promotes the starvation-induced increase of feeding motivation. Required in combination with Gr64a to detect sucrose, maltose, and glucose. The sequence is that of Gustatory receptor for sugar taste 64f (Gr64f) from Drosophila melanogaster (Fruit fly).